Reading from the N-terminus, the 61-residue chain is MAKDFLNGKRTHFGNKRSHALNSSRRAWKPNLQKVRILVDGKPKKVWISARTLKSGKVTRV.

The interval 1 to 26 (MAKDFLNGKRTHFGNKRSHALNSSRR) is disordered. Residues 9–19 (KRTHFGNKRSH) are compositionally biased toward basic residues.

Belongs to the bacterial ribosomal protein bL28 family.

In Levilactobacillus brevis (strain ATCC 367 / BCRC 12310 / CIP 105137 / JCM 1170 / LMG 11437 / NCIMB 947 / NCTC 947) (Lactobacillus brevis), this protein is Large ribosomal subunit protein bL28.